The primary structure comprises 553 residues: Sensitive to high expression protein 9 homolog, mitochondrial (553 aa).

The segment at 61–174 (FFSTQPPKDT…TAQPELPSRT (114 aa)) is disordered. A compositionally biased stretch (polar residues) spans 62–84 (FSTQPPKDTPENMNNKETGSSNV). The span at 103 to 116 (AKEDTTDATNKSET) shows a compositional bias: basic and acidic residues. Low complexity predominate over residues 133–160 (SDVSSASTSDSANSSETTTTTSETTPEN). Coiled-coil stretches lie at residues 210 to 241 (SAIEQIKRKNAELEVAHGQAQSRLRDARHNYK) and 277 to 309 (RLDHELEAQVAQAAQELTEAETEESRLSADLNA). Residues 331 to 351 (WGTWGLMGVNVLLFLVLQFVA) traverse the membrane as a helical segment. At 352-523 (EPWRRKRLMK…RIDLKMRDVS (172 aa)) the chain is on the mitochondrial intermembrane side. Disordered stretches follow at residues 408-428 (ALASTSSSSGDPQGGGGRTEG) and 443-497 (AEEA…QTLS). Low complexity-rich tracts occupy residues 443–473 (AEEAAEEAATAQQQQQQQQQQQQQQHHQTPE) and 484–495 (TWKQTAQKWQQT). The helical transmembrane segment at 524-544 (LLALESAATGAAVVASVAFFV) threads the bilayer. Residues 545 to 553 (LRSSGSGKA) lie on the Mitochondrial matrix side of the membrane.

The protein belongs to the SHE9 family. Homooligomer.

The protein localises to the mitochondrion inner membrane. Its function is as follows. Required for the maintenance of the structure of the mitochondrial inner membrane. Involved in mitochondrial morphology. Causes growth arrest when highly overexpressed. The protein is Sensitive to high expression protein 9 homolog, mitochondrial (she-9) of Neurospora crassa (strain ATCC 24698 / 74-OR23-1A / CBS 708.71 / DSM 1257 / FGSC 987).